The chain runs to 199 residues: ATP-dependent Clp protease proteolytic subunit (199 aa).

S103 functions as the Nucleophile in the catalytic mechanism. H128 is a catalytic residue.

The protein belongs to the peptidase S14 family. Fourteen ClpP subunits assemble into 2 heptameric rings which stack back to back to give a disk-like structure with a central cavity, resembling the structure of eukaryotic proteasomes.

The protein resides in the cytoplasm. It carries out the reaction Hydrolysis of proteins to small peptides in the presence of ATP and magnesium. alpha-casein is the usual test substrate. In the absence of ATP, only oligopeptides shorter than five residues are hydrolyzed (such as succinyl-Leu-Tyr-|-NHMec, and Leu-Tyr-Leu-|-Tyr-Trp, in which cleavage of the -Tyr-|-Leu- and -Tyr-|-Trp bonds also occurs).. Functionally, cleaves peptides in various proteins in a process that requires ATP hydrolysis. Has a chymotrypsin-like activity. Plays a major role in the degradation of misfolded proteins. This Photobacterium profundum (strain SS9) protein is ATP-dependent Clp protease proteolytic subunit.